The chain runs to 529 residues: Glucose-6-phosphate isomerase (529 aa).

Glu-322 serves as the catalytic Proton donor. Active-site residues include His-351 and Lys-455.

Belongs to the GPI family.

Its subcellular location is the cytoplasm. The enzyme catalyses alpha-D-glucose 6-phosphate = beta-D-fructose 6-phosphate. It participates in carbohydrate biosynthesis; gluconeogenesis. The protein operates within carbohydrate degradation; glycolysis; D-glyceraldehyde 3-phosphate and glycerone phosphate from D-glucose: step 2/4. Functionally, catalyzes the reversible isomerization of glucose-6-phosphate to fructose-6-phosphate. This chain is Glucose-6-phosphate isomerase, found in Acaryochloris marina (strain MBIC 11017).